Consider the following 260-residue polypeptide: UPF0246 protein Cbei_1739 (260 aa).

The protein belongs to the UPF0246 family.

The protein is UPF0246 protein Cbei_1739 of Clostridium beijerinckii (strain ATCC 51743 / NCIMB 8052) (Clostridium acetobutylicum).